The primary structure comprises 195 residues: Small ribosomal subunit protein uS7 (195 aa).

This sequence belongs to the universal ribosomal protein uS7 family. In terms of assembly, part of the 30S ribosomal subunit.

Functionally, one of the primary rRNA binding proteins, it binds directly to 16S rRNA where it nucleates assembly of the head domain of the 30S subunit. Is located at the subunit interface close to the decoding center. This is Small ribosomal subunit protein uS7 from Sulfolobus acidocaldarius (strain ATCC 33909 / DSM 639 / JCM 8929 / NBRC 15157 / NCIMB 11770).